The chain runs to 127 residues: EF-hand calcium-binding domain-containing protein 10 (127 aa).

The EF-hand domain occupies 63-98 (MDNSNIVAMFEMMDSSGRGTISFVQYKEALKTLGLC).

This chain is EF-hand calcium-binding domain-containing protein 10 (EFCAB10), found in Homo sapiens (Human).